Consider the following 553-residue polypeptide: Efflux pump mlcE (553 aa).

Residues 1 to 19 (MSEPLPPKEGEPRPQKEES) are compositionally biased toward basic and acidic residues. Residues 1 to 29 (MSEPLPPKEGEPRPQKEESQNDTLEATES) form a disordered region. Residue asparagine 21 is glycosylated (N-linked (GlcNAc...) asparagine). The next 13 membrane-spanning stretches (helical) occupy residues 41–61 (LVVASVTFVAFLMLLDMSIIV), 77–96 (VGWYGSAYLLANCALQPLAG), 101–121 (LLGLKYTFFAFLCIFELGSVL), 136–156 (AVAGMGGSGLVNGALTILSTA), 164–184 (VLIGVMMGLSQIAIVCGPLLG), 196–216 (CFYINLPIGAVAAFLLLVITI), 245–265 (LVGFVVFAAFATMISLALEWG), 273–293 (SSVIIGLFCGGGFALIAFVLW), 319–339 (LFMGFFSGSLLVFSYYLPIYF), 352–372 (VYMLPGILGQVIMAMVSGFAI), 376–396 (GYYLPWALGSAVLVAIGAGLV), 440–460 (ALGISLAVFGQTFGGSLFLDF), and 516–536 (TFYLAVGATACTFVFAFGMGW). Asparagine 543 is a glycosylation site (N-linked (GlcNAc...) asparagine).

This sequence belongs to the major facilitator superfamily. TCR/Tet family.

It is found in the membrane. Its function is as follows. Efflux pump; part of the gene cluster that mediates the biosynthesis of compactin, also known as mevastatin or ML-236B, and which acts as a potent competitive inhibitor of HMG-CoA reductase. This chain is Efflux pump mlcE, found in Penicillium citrinum.